An 870-amino-acid polypeptide reads, in one-letter code: Alanine--tRNA ligase (870 aa).

Residues His-585, His-589, Cys-689, and His-693 each coordinate Zn(2+).

It belongs to the class-II aminoacyl-tRNA synthetase family. Requires Zn(2+) as cofactor.

It localises to the cytoplasm. The catalysed reaction is tRNA(Ala) + L-alanine + ATP = L-alanyl-tRNA(Ala) + AMP + diphosphate. Catalyzes the attachment of alanine to tRNA(Ala) in a two-step reaction: alanine is first activated by ATP to form Ala-AMP and then transferred to the acceptor end of tRNA(Ala). Also edits incorrectly charged Ser-tRNA(Ala) and Gly-tRNA(Ala) via its editing domain. This chain is Alanine--tRNA ligase, found in Picrophilus torridus (strain ATCC 700027 / DSM 9790 / JCM 10055 / NBRC 100828 / KAW 2/3).